The chain runs to 421 residues: MNNDEYLTALGQNAKQASYALATLSGQQKSALLRCIANKLTAAKDDIVAANQQDVADAKANGLSDAMIDRLLLDETRLMGVISDIDNVIGLTDPVGCEIDSRLLDNGLRLSRRRVPLGVIGVIYEARPNVTVDIAVLALKTGNAVILRGGKETLSSNKALCKVIRSAMVEQGLSEDCVQLIDNPDRALVSGLLKLDKYVDMIVPRGGQNLQRLCAEQATIPVILGGIGICHIYVDAAANLEKAVAVIENAKVQRPTVCNALDTVLVHASHAKAFIPVLAKHLSGLGVKFYGCEQTQAILGAEKIEVSAADDESYSTEWLSLTLGLKVVADLESAVEHIRTFSSGHSESILTDNIHTASEFMNAVDSAAVYVNASTRFTDGGEFGLGAEVAVSTQKLHARGPMGLEALTTYKWLAWGDYTVR.

The protein belongs to the gamma-glutamyl phosphate reductase family.

The protein localises to the cytoplasm. It catalyses the reaction L-glutamate 5-semialdehyde + phosphate + NADP(+) = L-glutamyl 5-phosphate + NADPH + H(+). It functions in the pathway amino-acid biosynthesis; L-proline biosynthesis; L-glutamate 5-semialdehyde from L-glutamate: step 2/2. Functionally, catalyzes the NADPH-dependent reduction of L-glutamate 5-phosphate into L-glutamate 5-semialdehyde and phosphate. The product spontaneously undergoes cyclization to form 1-pyrroline-5-carboxylate. The chain is Gamma-glutamyl phosphate reductase from Shewanella pealeana (strain ATCC 700345 / ANG-SQ1).